Here is a 146-residue protein sequence, read N- to C-terminus: Anti-sigma F factor (146 aa).

The protein belongs to the anti-sigma-factor family.

The enzyme catalyses L-seryl-[protein] + ATP = O-phospho-L-seryl-[protein] + ADP + H(+). The catalysed reaction is L-threonyl-[protein] + ATP = O-phospho-L-threonyl-[protein] + ADP + H(+). Functionally, binds to sigma F and blocks its ability to form an RNA polymerase holoenzyme (E-sigma F). Phosphorylates SpoIIAA on a serine residue. This phosphorylation may enable SpoIIAA to act as an anti-anti-sigma factor that counteracts SpoIIAB and thus releases sigma F from inhibition. This Bacillus velezensis (strain DSM 23117 / BGSC 10A6 / LMG 26770 / FZB42) (Bacillus amyloliquefaciens subsp. plantarum) protein is Anti-sigma F factor.